The following is a 612-amino-acid chain: Dihydroxy-acid dehydratase (612 aa).

Residue aspartate 81 participates in Mg(2+) binding. Cysteine 122 contributes to the [2Fe-2S] cluster binding site. The Mg(2+) site is built by aspartate 123 and lysine 124. Lysine 124 carries the N6-carboxylysine modification. Cysteine 195 provides a ligand contact to [2Fe-2S] cluster. Residue glutamate 491 participates in Mg(2+) binding. The Proton acceptor role is filled by serine 517.

It belongs to the IlvD/Edd family. Homodimer. The cofactor is [2Fe-2S] cluster. Mg(2+) serves as cofactor.

The enzyme catalyses (2R)-2,3-dihydroxy-3-methylbutanoate = 3-methyl-2-oxobutanoate + H2O. It carries out the reaction (2R,3R)-2,3-dihydroxy-3-methylpentanoate = (S)-3-methyl-2-oxopentanoate + H2O. Its pathway is amino-acid biosynthesis; L-isoleucine biosynthesis; L-isoleucine from 2-oxobutanoate: step 3/4. It participates in amino-acid biosynthesis; L-valine biosynthesis; L-valine from pyruvate: step 3/4. Functions in the biosynthesis of branched-chain amino acids. Catalyzes the dehydration of (2R,3R)-2,3-dihydroxy-3-methylpentanoate (2,3-dihydroxy-3-methylvalerate) into 2-oxo-3-methylpentanoate (2-oxo-3-methylvalerate) and of (2R)-2,3-dihydroxy-3-methylbutanoate (2,3-dihydroxyisovalerate) into 2-oxo-3-methylbutanoate (2-oxoisovalerate), the penultimate precursor to L-isoleucine and L-valine, respectively. The polypeptide is Dihydroxy-acid dehydratase (Bartonella tribocorum (strain CIP 105476 / IBS 506)).